Reading from the N-terminus, the 526-residue chain is Exodeoxyribonuclease 7 large subunit (526 aa).

A disordered region spans residues 496-526 (GAMTTEGGTPPAGAKKRSAKPADPTKQGSLF).

The protein belongs to the XseA family. Heterooligomer composed of large and small subunits.

The protein resides in the cytoplasm. It catalyses the reaction Exonucleolytic cleavage in either 5'- to 3'- or 3'- to 5'-direction to yield nucleoside 5'-phosphates.. Bidirectionally degrades single-stranded DNA into large acid-insoluble oligonucleotides, which are then degraded further into small acid-soluble oligonucleotides. The polypeptide is Exodeoxyribonuclease 7 large subunit (Rhizobium etli (strain CIAT 652)).